The sequence spans 119 residues: Ig heavy chain V region X44 (119 aa).

The 117-residue stretch at 1-117 folds into the Ig-like domain; sequence EVKLLESGGG…WGQGTLVTVS (117 aa).

This chain is Ig heavy chain V region X44, found in Mus musculus (Mouse).